Consider the following 249-residue polypeptide: 1-(5-phosphoribosyl)-5-[(5-phosphoribosylamino)methylideneamino] imidazole-4-carboxamide isomerase (249 aa).

The Proton acceptor role is filled by Asp-11. The active-site Proton donor is the Asp-132.

The protein belongs to the HisA/HisF family.

It localises to the cytoplasm. It carries out the reaction 1-(5-phospho-beta-D-ribosyl)-5-[(5-phospho-beta-D-ribosylamino)methylideneamino]imidazole-4-carboxamide = 5-[(5-phospho-1-deoxy-D-ribulos-1-ylimino)methylamino]-1-(5-phospho-beta-D-ribosyl)imidazole-4-carboxamide. It functions in the pathway amino-acid biosynthesis; L-histidine biosynthesis; L-histidine from 5-phospho-alpha-D-ribose 1-diphosphate: step 4/9. This Nitrobacter winogradskyi (strain ATCC 25391 / DSM 10237 / CIP 104748 / NCIMB 11846 / Nb-255) protein is 1-(5-phosphoribosyl)-5-[(5-phosphoribosylamino)methylideneamino] imidazole-4-carboxamide isomerase.